The chain runs to 262 residues: Acyl-[acyl-carrier-protein]--UDP-N-acetylglucosamine O-acyltransferase (262 aa).

The protein belongs to the transferase hexapeptide repeat family. LpxA subfamily. As to quaternary structure, homotrimer.

It localises to the cytoplasm. It carries out the reaction a (3R)-hydroxyacyl-[ACP] + UDP-N-acetyl-alpha-D-glucosamine = a UDP-3-O-[(3R)-3-hydroxyacyl]-N-acetyl-alpha-D-glucosamine + holo-[ACP]. It participates in glycolipid biosynthesis; lipid IV(A) biosynthesis; lipid IV(A) from (3R)-3-hydroxytetradecanoyl-[acyl-carrier-protein] and UDP-N-acetyl-alpha-D-glucosamine: step 1/6. Its function is as follows. Involved in the biosynthesis of lipid A, a phosphorylated glycolipid that anchors the lipopolysaccharide to the outer membrane of the cell. This Blochmanniella floridana protein is Acyl-[acyl-carrier-protein]--UDP-N-acetylglucosamine O-acyltransferase.